The primary structure comprises 481 residues: GTPase Obg (481 aa).

The Obg domain occupies 2 to 159; the sequence is TTFVDRVVLH…IDVVLELKSV (158 aa). The 171-residue stretch at 160–330 folds into the OBG-type G domain; it reads ADVGLVGYPS…LMYAMGELVT (171 aa). Residues 166–173, 191–195, 212–215, 282–285, and 311–313 contribute to the GTP site; these read GYPSAGKS, FTTLV, DVPG, NKVD, and SAA. S173 and T193 together coordinate Mg(2+). In terms of domain architecture, OCT spans 348 to 426; sequence PKAVDDAGFT…IGEREFDWQP (79 aa). Positions 439 to 452 are enriched in basic and acidic residues; the sequence is GDQRLAEKSERPSA. The segment at 439-481 is disordered; the sequence is GDQRLAEKSERPSATERLAARKARRQRPEDEAEADEPVGDGEE. The span at 468–481 shows a compositional bias: acidic residues; sequence DEAEADEPVGDGEE.

The protein belongs to the TRAFAC class OBG-HflX-like GTPase superfamily. OBG GTPase family. As to quaternary structure, monomer. It depends on Mg(2+) as a cofactor.

The protein resides in the cytoplasm. An essential GTPase which binds GTP, GDP and possibly (p)ppGpp with moderate affinity, with high nucleotide exchange rates and a fairly low GTP hydrolysis rate. Plays a role in control of the cell cycle, stress response, ribosome biogenesis and in those bacteria that undergo differentiation, in morphogenesis control. This chain is GTPase Obg, found in Salinispora tropica (strain ATCC BAA-916 / DSM 44818 / JCM 13857 / NBRC 105044 / CNB-440).